The chain runs to 273 residues: Dermonecrotic toxin LhSicTox-alphaIA2ai (273 aa).

His5 is an active-site residue. Mg(2+) contacts are provided by Glu25 and Asp27. Residue His41 is the Nucleophile of the active site. Intrachain disulfides connect Cys45–Cys51 and Cys47–Cys190. Asp85 is a binding site for Mg(2+).

The protein belongs to the arthropod phospholipase D family. Class II subfamily. Mg(2+) is required as a cofactor. Expressed by the venom gland.

Its subcellular location is the secreted. The enzyme catalyses an N-(acyl)-sphingosylphosphocholine = an N-(acyl)-sphingosyl-1,3-cyclic phosphate + choline. It carries out the reaction an N-(acyl)-sphingosylphosphoethanolamine = an N-(acyl)-sphingosyl-1,3-cyclic phosphate + ethanolamine. It catalyses the reaction a 1-acyl-sn-glycero-3-phosphocholine = a 1-acyl-sn-glycero-2,3-cyclic phosphate + choline. The catalysed reaction is a 1-acyl-sn-glycero-3-phosphoethanolamine = a 1-acyl-sn-glycero-2,3-cyclic phosphate + ethanolamine. Functionally, dermonecrotic toxins cleave the phosphodiester linkage between the phosphate and headgroup of certain phospholipids (sphingolipid and lysolipid substrates), forming an alcohol (often choline) and a cyclic phosphate. This toxin acts on sphingomyelin (SM). It may also act on ceramide phosphoethanolamine (CPE), lysophosphatidylcholine (LPC) and lysophosphatidylethanolamine (LPE), but not on lysophosphatidylserine (LPS), and lysophosphatidylglycerol (LPG). It acts by transphosphatidylation, releasing exclusively cyclic phosphate products as second products. Induces dermonecrosis, hemolysis, increased vascular permeability, edema, inflammatory response, and platelet aggregation. The chain is Dermonecrotic toxin LhSicTox-alphaIA2ai from Loxosceles hirsuta (Recluse spider).